We begin with the raw amino-acid sequence, 224 residues long: UPF0111 protein CT_691 (224 aa).

This sequence belongs to the UPF0111 family.

This is UPF0111 protein CT_691 from Chlamydia trachomatis serovar D (strain ATCC VR-885 / DSM 19411 / UW-3/Cx).